We begin with the raw amino-acid sequence, 335 residues long: 4-hydroxy-3-methylbut-2-enyl diphosphate reductase (335 aa).

Residue C21 coordinates [4Fe-4S] cluster. Positions 50 and 86 each coordinate (2E)-4-hydroxy-3-methylbut-2-enyl diphosphate. Dimethylallyl diphosphate-binding residues include H50 and H86. Isopentenyl diphosphate-binding residues include H50 and H86. C108 contributes to the [4Fe-4S] cluster binding site. A (2E)-4-hydroxy-3-methylbut-2-enyl diphosphate-binding site is contributed by H136. H136 provides a ligand contact to dimethylallyl diphosphate. Residue H136 participates in isopentenyl diphosphate binding. E138 serves as the catalytic Proton donor. T177 contacts (2E)-4-hydroxy-3-methylbut-2-enyl diphosphate. C207 lines the [4Fe-4S] cluster pocket. The (2E)-4-hydroxy-3-methylbut-2-enyl diphosphate site is built by S235, S236, N237, and S280. Residues S235, S236, N237, and S280 each contribute to the dimethylallyl diphosphate site. S235, S236, N237, and S280 together coordinate isopentenyl diphosphate.

The protein belongs to the IspH family. [4Fe-4S] cluster serves as cofactor.

The enzyme catalyses isopentenyl diphosphate + 2 oxidized [2Fe-2S]-[ferredoxin] + H2O = (2E)-4-hydroxy-3-methylbut-2-enyl diphosphate + 2 reduced [2Fe-2S]-[ferredoxin] + 2 H(+). It catalyses the reaction dimethylallyl diphosphate + 2 oxidized [2Fe-2S]-[ferredoxin] + H2O = (2E)-4-hydroxy-3-methylbut-2-enyl diphosphate + 2 reduced [2Fe-2S]-[ferredoxin] + 2 H(+). Its pathway is isoprenoid biosynthesis; dimethylallyl diphosphate biosynthesis; dimethylallyl diphosphate from (2E)-4-hydroxy-3-methylbutenyl diphosphate: step 1/1. It functions in the pathway isoprenoid biosynthesis; isopentenyl diphosphate biosynthesis via DXP pathway; isopentenyl diphosphate from 1-deoxy-D-xylulose 5-phosphate: step 6/6. Its function is as follows. Catalyzes the conversion of 1-hydroxy-2-methyl-2-(E)-butenyl 4-diphosphate (HMBPP) into a mixture of isopentenyl diphosphate (IPP) and dimethylallyl diphosphate (DMAPP). Acts in the terminal step of the DOXP/MEP pathway for isoprenoid precursor biosynthesis. In Rhizobium rhizogenes (strain K84 / ATCC BAA-868) (Agrobacterium radiobacter), this protein is 4-hydroxy-3-methylbut-2-enyl diphosphate reductase.